Consider the following 457-residue polypeptide: F-box/LRR-repeat protein At2g42730 (457 aa).

The 47-residue stretch at K4–D50 folds into the F-box domain. LRR repeat units follow at residues M265–L288, I292–M315, and F318–N343.

The sequence is that of F-box/LRR-repeat protein At2g42730 from Arabidopsis thaliana (Mouse-ear cress).